The chain runs to 351 residues: tRNA pseudouridine synthase D (351 aa).

D81 (nucleophile) is an active-site residue. The TRUD domain occupies 158–304; it reads GVPNYFGSQR…MRHERRAIEL (147 aa).

Belongs to the pseudouridine synthase TruD family.

It catalyses the reaction uridine(13) in tRNA = pseudouridine(13) in tRNA. Functionally, responsible for synthesis of pseudouridine from uracil-13 in transfer RNAs. The sequence is that of tRNA pseudouridine synthase D from Aliivibrio fischeri (strain MJ11) (Vibrio fischeri).